The chain runs to 94 residues: Large ribosomal subunit protein uL22 (94 aa).

It belongs to the universal ribosomal protein uL22 family. As to quaternary structure, part of the 50S ribosomal subunit.

Its function is as follows. This protein binds specifically to 23S rRNA; its binding is stimulated by other ribosomal proteins, e.g. L4, L17, and L20. It is important during the early stages of 50S assembly. It makes multiple contacts with different domains of the 23S rRNA in the assembled 50S subunit and ribosome. In terms of biological role, the globular domain of the protein is located near the polypeptide exit tunnel on the outside of the subunit, while an extended beta-hairpin is found that lines the wall of the exit tunnel in the center of the 70S ribosome. The polypeptide is Large ribosomal subunit protein uL22 (rplV) (Tomato big bud phytoplasma).